A 232-amino-acid polypeptide reads, in one-letter code: Large ribosomal subunit protein uL1 (232 aa).

This sequence belongs to the universal ribosomal protein uL1 family. As to quaternary structure, part of the 50S ribosomal subunit.

Binds directly to 23S rRNA. The L1 stalk is quite mobile in the ribosome, and is involved in E site tRNA release. In terms of biological role, protein L1 is also a translational repressor protein, it controls the translation of the L11 operon by binding to its mRNA. The protein is Large ribosomal subunit protein uL1 of Thermosipho melanesiensis (strain DSM 12029 / CIP 104789 / BI429).